Consider the following 204-residue polypeptide: dTTP/UTP pyrophosphatase (204 aa).

Asp68 serves as the catalytic Proton acceptor.

The protein belongs to the Maf family. YhdE subfamily. A divalent metal cation serves as cofactor.

Its subcellular location is the cytoplasm. The catalysed reaction is dTTP + H2O = dTMP + diphosphate + H(+). It carries out the reaction UTP + H2O = UMP + diphosphate + H(+). In terms of biological role, nucleoside triphosphate pyrophosphatase that hydrolyzes dTTP and UTP. May have a dual role in cell division arrest and in preventing the incorporation of modified nucleotides into cellular nucleic acids. The chain is dTTP/UTP pyrophosphatase from Thermotoga petrophila (strain ATCC BAA-488 / DSM 13995 / JCM 10881 / RKU-1).